Consider the following 515-residue polypeptide: Vacuolar fusion protein CCZ1 homolog A (515 aa).

This sequence belongs to the CCZ1 family. Interacts with MON1.

The protein resides in the endosome. It is found in the prevacuolar compartment. Its function is as follows. Plays an important role in membrane trafficking through the secretory apparatus. In complex with MON1, acts as a guanine exchange factor (GEF) for RABG3F of the Rab7 protein family. Promotes the exchange of GDP to GTP, converting RABG3F from an inactive GDP-bound form into an active GTP-bound form. The RABG3F active form is involved in protein trafficking from prevacuolar compartments (PVCs) to vacuoles. May serve as a linker between Rab5 and Rab7 protein families in PVCs and mediate PVC maturation. The sequence is that of Vacuolar fusion protein CCZ1 homolog A from Arabidopsis thaliana (Mouse-ear cress).